Here is a 20-residue protein sequence, read N- to C-terminus: Peroxidase 1 (20 aa).

H14 is a binding site for heme. Ca(2+) is bound at residue T15.

It belongs to the peroxidase family. Classical plant (class III) peroxidase subfamily. Ca(2+) serves as cofactor. Heme b is required as a cofactor.

It is found in the secreted. It carries out the reaction 2 a phenolic donor + H2O2 = 2 a phenolic radical donor + 2 H2O. Functionally, removal of H(2)O(2), oxidation of toxic reductants, biosynthesis and degradation of lignin, suberization, auxin catabolism, response to environmental stresses such as wounding, pathogen attack and oxidative stress. These functions might be dependent on each isozyme/isoform in each plant tissue. In Betula pendula (European white birch), this protein is Peroxidase 1.